Here is a 589-residue protein sequence, read N- to C-terminus: Carbonic anhydrase (589 aa).

Alpha-carbonic anhydrase domains lie at 59-316 (HDYN…YEYK) and 321-585 (DKYN…YGYN). 258 to 259 (TT) contributes to the substrate binding site. The catalytic stretch occupies residues 390-589 (MQINFGDPPA…TVYGYNGAAA (200 aa)). Zn(2+)-binding residues include histidine 420, histidine 422, and histidine 440.

Belongs to the alpha-carbonic anhydrase family. Zn(2+) serves as cofactor.

It carries out the reaction hydrogencarbonate + H(+) = CO2 + H2O. In terms of biological role, reversible hydration of carbon dioxide. This chain is Carbonic anhydrase (DCA), found in Dunaliella salina (Green alga).